The sequence spans 843 residues: Protein P (843 aa).

Residues 1–177 (MPLSYQHFRK…FCGSPYSWEQ (177 aa)) are terminal protein domain (TP). A spacer region spans residues 178–346 (ELQHGRLVFQ…YCLTHIVNLL (169 aa)). The tract at residues 347–690 (EDWGPCTEHG…YLHLYPVARQ (344 aa)) is polymerase/reverse transcriptase domain (RT). A Reverse transcriptase domain is found at 357–600 (EHNIRIPRTP…YSLNFMGYVI (244 aa)). Residues Asp-429, Asp-551, and Asp-552 each coordinate Mg(2+).

This sequence belongs to the hepadnaviridae P protein family.

The enzyme catalyses DNA(n) + a 2'-deoxyribonucleoside 5'-triphosphate = DNA(n+1) + diphosphate. It carries out the reaction Endonucleolytic cleavage to 5'-phosphomonoester.. With respect to regulation, activated by host HSP70 and HSP40 in vitro to be able to bind the epsilon loop of the pgRNA. Because deletion of the RNase H region renders the protein partly chaperone-independent, the chaperones may be needed indirectly to relieve occlusion of the RNA-binding site by this domain. Inhibited by several reverse-transcriptase inhibitors: Lamivudine, Adefovir and Entecavir. In terms of biological role, multifunctional enzyme that converts the viral RNA genome into dsDNA in viral cytoplasmic capsids. This enzyme displays a DNA polymerase activity that can copy either DNA or RNA templates, and a ribonuclease H (RNase H) activity that cleaves the RNA strand of RNA-DNA heteroduplexes in a partially processive 3'- to 5'-endonucleasic mode. Neo-synthesized pregenomic RNA (pgRNA) are encapsidated together with the P protein, and reverse-transcribed inside the nucleocapsid. Initiation of reverse-transcription occurs first by binding the epsilon loop on the pgRNA genome, and is initiated by protein priming, thereby the 5'-end of (-)DNA is covalently linked to P protein. Partial (+)DNA is synthesized from the (-)DNA template and generates the relaxed circular DNA (RC-DNA) genome. After budding and infection, the RC-DNA migrates in the nucleus, and is converted into a plasmid-like covalently closed circular DNA (cccDNA). The activity of P protein does not seem to be necessary for cccDNA generation, and is presumably released from (+)DNA by host nuclear DNA repair machinery. This is Protein P from Hepatitis B virus genotype C subtype adr (isolate Japan/Nishioka/1983) (HBV-C).